The following is a 1609-amino-acid chain: Probable cation-transporting ATPase I (1609 aa).

10 helical membrane-spanning segments follow: residues 30-50 (GAVNTMQMLASPVAEFAWPVV), 176-196 (LAILMPLTAAVMDLVALSAAV), 238-258 (IALSITTAAASGLTQAVGTPL), 357-377 (LIAAASALLAGGGTEDAAGAI), 641-661 (VHLAQGGTTLAGLLLITASAG), 673-693 (WFSPVNAAAATALVTGVVSAS), 778-798 (ILAVGAAASAIVGSNIDALLV), 921-941 (LFEGSAIVAGHARAIVVATGV), 969-989 (TSKVLPLTLAGGAAVTGLALL), and 997-1017 (AVADGVAIAVAAVPEGLPLVA). Asp1053 acts as the 4-aspartylphosphate intermediate in catalysis. Residues Asp1335 and Asp1339 each contribute to the Mg(2+) site. A run of 2 helical transmembrane segments spans residues 1396–1416 (ILVGGNVGEVVFTIIGTVFGA) and 1426–1446 (LLLVNLLTDMFPALSIAVTSQ). Residues 1447-1476 (YEEPGEDEYQTDEEADEARRTHQHEVLTGP) are disordered. Residues 1449–1462 (EPGEDEYQTDEEAD) show a composition bias toward acidic residues. 2 consecutive transmembrane segments (helical) span residues 1542 to 1562 (VVATALGSAGVLIGIIQTPVI) and 1573 to 1593 (PIAWSGVITATAGATAVSVLA).

It belongs to the cation transport ATPase (P-type) (TC 3.A.3) family.

The protein localises to the cell membrane. It catalyses the reaction ATP + H2O = ADP + phosphate + H(+). The polypeptide is Probable cation-transporting ATPase I (ctpI) (Mycobacterium leprae (strain TN)).